The primary structure comprises 176 residues: Large ribosomal subunit protein uL6 (176 aa).

Belongs to the universal ribosomal protein uL6 family. As to quaternary structure, part of the 50S ribosomal subunit.

This protein binds to the 23S rRNA, and is important in its secondary structure. It is located near the subunit interface in the base of the L7/L12 stalk, and near the tRNA binding site of the peptidyltransferase center. The chain is Large ribosomal subunit protein uL6 from Dechloromonas aromatica (strain RCB).